The sequence spans 153 residues: Calmodulin-like protein 4 (153 aa).

4 EF-hand domains span residues 8 to 43, 44 to 79, 81 to 116, and 117 to 152; these read DAIQ…LGTC, PTPG…QQKQ, DPEN…MGEK, and LTPE…PVPD.

Belongs to the calmodulin family. As to quaternary structure, associates with the IMAC/intermicrovillar adhesion complex.

It localises to the cell projection. The protein localises to the microvillus. Functionally, as part of the intermicrovillar adhesion complex/IMAC plays a role in epithelial brush border differentiation, controlling microvilli organization and length. Acts as a light chain for MYO7B and is required for efficient targeting of the IMAC to the tips of border brush microvilli. The sequence is that of Calmodulin-like protein 4 (calml4) from Xenopus tropicalis (Western clawed frog).